We begin with the raw amino-acid sequence, 603 residues long: O-acetyltransferase OatA (603 aa).

Helical transmembrane passes span 17 to 37 (YLPG…IYHL), 45 to 65 (GFLG…SLLI), 87 to 107 (LIPA…IFKP), 148 to 168 (LWSL…ITFL), 177 to 197 (IIQT…VIHF), 211 to 231 (TRLQ…PFAL), 239 to 259 (IVVS…TLFF), 268 to 288 (IYNG…AIAV), 311 to 331 (YSLY…YVQG), 333 to 353 (IPVY…EISY), and 382 to 402 (VLVI…FDAL). Residues S453, D575, and H578 contribute to the active site.

It belongs to the acyltransferase 3 family. Monomer.

Its subcellular location is the cell membrane. Responsible for O-acetylation at the C(6)-hydroxyl group of N-acetylmuramyl residues, forming the corresponding N,6-O-diacetylmuramic acid of the peptidoglycan. O-acetylation of the peptidoglycan is the major determinant for lysozyme resistance. This Staphylococcus aureus (strain NCTC 8325 / PS 47) protein is O-acetyltransferase OatA.